A 415-amino-acid chain; its full sequence is Serine hydroxymethyltransferase (415 aa).

Residues Leu-121 and 125–127 (GHL) each bind (6S)-5,6,7,8-tetrahydrofolate. Lys-229 is modified (N6-(pyridoxal phosphate)lysine).

The protein belongs to the SHMT family. Homodimer. Pyridoxal 5'-phosphate serves as cofactor.

Its subcellular location is the cytoplasm. The catalysed reaction is (6R)-5,10-methylene-5,6,7,8-tetrahydrofolate + glycine + H2O = (6S)-5,6,7,8-tetrahydrofolate + L-serine. Its pathway is one-carbon metabolism; tetrahydrofolate interconversion. It functions in the pathway amino-acid biosynthesis; glycine biosynthesis; glycine from L-serine: step 1/1. Functionally, catalyzes the reversible interconversion of serine and glycine with tetrahydrofolate (THF) serving as the one-carbon carrier. This reaction serves as the major source of one-carbon groups required for the biosynthesis of purines, thymidylate, methionine, and other important biomolecules. Also exhibits THF-independent aldolase activity toward beta-hydroxyamino acids, producing glycine and aldehydes, via a retro-aldol mechanism. This Bordetella petrii (strain ATCC BAA-461 / DSM 12804 / CCUG 43448) protein is Serine hydroxymethyltransferase.